The chain runs to 930 residues: Translation initiation factor IF-2 (930 aa).

2 disordered regions span residues 160–179 (EPVE…FTDG) and 208–301 (AKRA…AAAP). A compositionally biased stretch (basic and acidic residues) spans 208–227 (AKRAAEEAKRTQPRAEKPAD). 2 stretches are compositionally biased toward basic residues: residues 263–272 (GHGHKKHHHG) and 288–301 (KRGA…AAAP). Residues 431–600 (TRAPVVTVMG…SLQAEVLELT (170 aa)) form the tr-type G domain. The tract at residues 440 to 447 (GHVDHGKT) is G1. 440–447 (GHVDHGKT) serves as a coordination point for GTP. The tract at residues 465–469 (GITQH) is G2. A G3 region spans residues 486–489 (DTPG). GTP-binding positions include 486–490 (DTPGH) and 540–543 (NKCD). The interval 540–543 (NKCD) is G4. The G5 stretch occupies residues 576–578 (SAH).

Belongs to the TRAFAC class translation factor GTPase superfamily. Classic translation factor GTPase family. IF-2 subfamily.

The protein localises to the cytoplasm. One of the essential components for the initiation of protein synthesis. Protects formylmethionyl-tRNA from spontaneous hydrolysis and promotes its binding to the 30S ribosomal subunits. Also involved in the hydrolysis of GTP during the formation of the 70S ribosomal complex. This is Translation initiation factor IF-2 from Cellvibrio japonicus (strain Ueda107) (Pseudomonas fluorescens subsp. cellulosa).